Here is an 85-residue protein sequence, read N- to C-terminus: UPF0291 protein SPH_1589 (85 aa).

Residues Thr62–Ser85 form a disordered region.

The protein belongs to the UPF0291 family.

The protein resides in the cytoplasm. This is UPF0291 protein SPH_1589 from Streptococcus pneumoniae (strain Hungary19A-6).